The chain runs to 495 residues: Solute carrier family 2, facilitated glucose transporter member 3 (495 aa).

Residues 1–10 (MGTQKVTVSL) lie on the Cytoplasmic side of the membrane. A helical transmembrane segment spans residues 11 to 32 (IFALSIATIGSFQFGYNTGVIN). Over 33–64 (APETIIKDFLNYTLEEKSENLPTEVLLTSLWS) the chain is Extracellular. Asn-43 carries an N-linked (GlcNAc...) asparagine glycan. The chain crosses the membrane as a helical span at residues 65-85 (LSVAIFSVGGMIGSFSVGLFV). At 86 to 90 (NRFGR) the chain is on the cytoplasmic side. The helical transmembrane segment at 91–111 (RNSMLMVNLLAVAGGCLMGFC) threads the bilayer. At 112–118 (KIAQSVE) the chain is on the extracellular side. A helical transmembrane segment spans residues 119 to 142 (MLILGRLIIGLFCGLCTGFVPMYI). At 143–153 (GEISPTALRGA) the chain is on the cytoplasmic side. The helical transmembrane segment at 154–174 (FGTLNQLGIVIGILVAQIFGL) threads the bilayer. Gln-159 contributes to the D-glucose binding site. At 175-183 (KVIMGTEEL) the chain is on the extracellular side. The helical transmembrane segment at 184–204 (WPLLLGFTIIPAVLQSAALPF) threads the bilayer. Topologically, residues 205 to 269 (CPESPRFLLI…LFRSRSYRQP (65 aa)) are cytoplasmic. Residue Thr-232 is modified to Phosphothreonine. A helical membrane pass occupies residues 270–290 (IIISIMLQLSQQLSGINAVFY). Positions 277–279 (QLS) are important for selectivity against fructose. D-glucose contacts are provided by residues 280–281 (QQ) and Asn-286. Residues 291 to 304 (YSTGIFKDAGVEEP) lie on the Extracellular side of the membrane. The helical transmembrane segment at 305 to 325 (IYATIGAGVVNTIFTVVSLFL) threads the bilayer. Asn-315 is a D-glucose binding site. Over 326–331 (VERAGR) the chain is Cytoplasmic. A helical membrane pass occupies residues 332–352 (RTLHMIGLGGMAVCSILMTIS). At 353–363 (LLLKDNYNWMS) the chain is on the extracellular side. Residues 364–389 (FVCIGAILVFVAFFEIGPGPIPWFIV) form a helical membrane-spanning segment. Residues Glu-378 and Trp-386 each contribute to the D-glucose site. Over 390–399 (AELFSQGPRP) the chain is Cytoplasmic. A helical membrane pass occupies residues 400-420 (AAMAVAGCSNWTSNFLVGLLF). The Extracellular portion of the chain corresponds to 421 to 429 (PSAAFYLGA). Residues 430-450 (YVFIIFTGFLIVFLVFTFFKV) form a helical membrane-spanning segment. Residues 451-495 (PETRGRTFEEITRAFEGQGQDANRAEKGPIVEMNSMQPVKETATV) are Cytoplasmic-facing. Ser-485 carries the post-translational modification Phosphoserine. Thr-492 carries the phosphothreonine modification.

Belongs to the major facilitator superfamily. Sugar transporter (TC 2.A.1.1) family. Glucose transporter subfamily. As to quaternary structure, interacts with SMIM43; the interaction may promote SLC2A3-mediated glucose transport to meet the energy needs of mesendoderm differentiation.

The protein resides in the cell membrane. Its subcellular location is the perikaryon. It localises to the cell projection. The enzyme catalyses D-glucose(out) = D-glucose(in). The catalysed reaction is D-galactose(in) = D-galactose(out). Deoxyglucose transport is inhibited by D-glucose, D-galactose and maltose. Galactose transport is inhibited by D-glucose and maltose. Facilitative glucose transporter. Can also mediate the uptake of various other monosaccharides across the cell membrane. Mediates the uptake of glucose, 2-deoxyglucose, galactose, mannose, xylose and fucose, and probably also dehydroascorbate. Does not mediate fructose transport. Required for mesendoderm differentiation. The protein is Solute carrier family 2, facilitated glucose transporter member 3 of Canis lupus familiaris (Dog).